The primary structure comprises 292 residues: 5,10-methylenetetrahydrofolate reductase (292 aa).

Glutamate 28 acts as the Proton donor/acceptor in catalysis. Threonine 59 provides a ligand contact to NADH. FAD is bound by residues tyrosine 60, alanine 62, histidine 88, arginine 118, glycine 119, aspartate 120, alanine 132, tyrosine 152, histidine 156, aspartate 165, asparagine 168, lysine 171, and lysine 172. Residue aspartate 120 coordinates (6S)-5-methyl-5,6,7,8-tetrahydrofolate. An NADH-binding site is contributed by glutamine 183. Residues glutamine 183, glutamine 219, and lysine 279 each coordinate (6S)-5-methyl-5,6,7,8-tetrahydrofolate.

Belongs to the methylenetetrahydrofolate reductase family. Requires FAD as cofactor.

It carries out the reaction (6S)-5-methyl-5,6,7,8-tetrahydrofolate + NAD(+) = (6R)-5,10-methylene-5,6,7,8-tetrahydrofolate + NADH + H(+). Its pathway is one-carbon metabolism; tetrahydrofolate interconversion. It functions in the pathway amino-acid biosynthesis; L-methionine biosynthesis via de novo pathway. Catalyzes the NADH-dependent reduction of 5,10-methylenetetrahydrofolate to 5-methyltetrahydrofolate. Is required to provide the methyl group necessary for methionine synthetase to convert homocysteine to methionine; the methyl group is given by 5-methyltetrahydrofolate. The sequence is that of 5,10-methylenetetrahydrofolate reductase (metF) from Buchnera aphidicola subsp. Schizaphis graminum (strain Sg).